The sequence spans 104 residues: DNA-directed RNA polymerase subunit omega (104 aa).

It belongs to the RNA polymerase subunit omega family. In terms of assembly, the RNAP catalytic core consists of 2 alpha, 1 beta, 1 beta' and 1 omega subunit. When a sigma factor is associated with the core the holoenzyme is formed, which can initiate transcription.

It catalyses the reaction RNA(n) + a ribonucleoside 5'-triphosphate = RNA(n+1) + diphosphate. Functionally, promotes RNA polymerase assembly. Latches the N- and C-terminal regions of the beta' subunit thereby facilitating its interaction with the beta and alpha subunits. This chain is DNA-directed RNA polymerase subunit omega, found in Streptococcus agalactiae serotype Ia (strain ATCC 27591 / A909 / CDC SS700).